The primary structure comprises 334 residues: L-lactate dehydrogenase B chain (334 aa).

NAD(+)-binding positions include 30–58 (GQVGMACAVSILLRELTDEIALVDVLEDK) and Arg100. Arg107, Asn139, and Arg170 together coordinate substrate. Position 139 (Asn139) interacts with NAD(+). His194 serves as the catalytic Proton acceptor. Substrate is bound at residue Thr249.

This sequence belongs to the LDH/MDH superfamily. LDH family. Homotetramer.

It is found in the cytoplasm. It carries out the reaction (S)-lactate + NAD(+) = pyruvate + NADH + H(+). It functions in the pathway fermentation; pyruvate fermentation to lactate; (S)-lactate from pyruvate: step 1/1. Its function is as follows. Interconverts simultaneously and stereospecifically pyruvate and lactate with concomitant interconversion of NADH and NAD(+). The chain is L-lactate dehydrogenase B chain (ldhb) from Squalus acanthias (Spiny dogfish).